Consider the following 404-residue polypeptide: Probable tRNA sulfurtransferase (404 aa).

Residues 61–166 (EAVSERLKDV…SGYSYIMCDE (106 aa)) enclose the THUMP domain. ATP contacts are provided by residues 184–185 (LL), 209–210 (HF), arginine 266, glycine 288, and glutamine 297.

It belongs to the ThiI family.

The protein resides in the cytoplasm. It carries out the reaction [ThiI sulfur-carrier protein]-S-sulfanyl-L-cysteine + a uridine in tRNA + 2 reduced [2Fe-2S]-[ferredoxin] + ATP + H(+) = [ThiI sulfur-carrier protein]-L-cysteine + a 4-thiouridine in tRNA + 2 oxidized [2Fe-2S]-[ferredoxin] + AMP + diphosphate. It catalyses the reaction [ThiS sulfur-carrier protein]-C-terminal Gly-Gly-AMP + S-sulfanyl-L-cysteinyl-[cysteine desulfurase] + AH2 = [ThiS sulfur-carrier protein]-C-terminal-Gly-aminoethanethioate + L-cysteinyl-[cysteine desulfurase] + A + AMP + 2 H(+). Its pathway is cofactor biosynthesis; thiamine diphosphate biosynthesis. Catalyzes the ATP-dependent transfer of a sulfur to tRNA to produce 4-thiouridine in position 8 of tRNAs, which functions as a near-UV photosensor. Also catalyzes the transfer of sulfur to the sulfur carrier protein ThiS, forming ThiS-thiocarboxylate. This is a step in the synthesis of thiazole, in the thiamine biosynthesis pathway. The sulfur is donated as persulfide by IscS. This is Probable tRNA sulfurtransferase from Bacillus cereus (strain AH820).